The primary structure comprises 492 residues: Anthranilate synthase component 1 (492 aa).

Residues serine 48 and 273–275 (PYM) contribute to the L-tryptophan site. A chorismate-binding site is contributed by 308–309 (GT). Glutamate 335 is a Mg(2+) binding site. Residues tyrosine 423, arginine 443, 457–459 (GGG), and glycine 459 contribute to the chorismate site. Residue glutamate 472 participates in Mg(2+) binding.

Belongs to the anthranilate synthase component I family. As to quaternary structure, heterotetramer consisting of two non-identical subunits: a beta subunit (TrpG) and a large alpha subunit (TrpE). Requires Mg(2+) as cofactor.

It carries out the reaction chorismate + L-glutamine = anthranilate + pyruvate + L-glutamate + H(+). It functions in the pathway amino-acid biosynthesis; L-tryptophan biosynthesis; L-tryptophan from chorismate: step 1/5. Feedback inhibited by tryptophan. Its function is as follows. Part of a heterotetrameric complex that catalyzes the two-step biosynthesis of anthranilate, an intermediate in the biosynthesis of L-tryptophan. In the first step, the glutamine-binding beta subunit (TrpG) of anthranilate synthase (AS) provides the glutamine amidotransferase activity which generates ammonia as a substrate that, along with chorismate, is used in the second step, catalyzed by the large alpha subunit of AS (TrpE) to produce anthranilate. In the absence of TrpG, TrpE can synthesize anthranilate directly from chorismate and high concentrations of ammonia. This chain is Anthranilate synthase component 1, found in Pseudomonas aeruginosa (strain ATCC 15692 / DSM 22644 / CIP 104116 / JCM 14847 / LMG 12228 / 1C / PRS 101 / PAO1).